Consider the following 299-residue polypeptide: Oxygen-dependent coproporphyrinogen-III oxidase (299 aa).

S92 contacts substrate. Positions 96 and 106 each coordinate a divalent metal cation. Residue H106 is the Proton donor of the active site. Residue N108–R110 participates in substrate binding. The a divalent metal cation site is built by H145 and H175. An important for dimerization region spans residues Y239 to E274. Residue G257 to R259 coordinates substrate.

This sequence belongs to the aerobic coproporphyrinogen-III oxidase family. Homodimer. Requires a divalent metal cation as cofactor.

The protein resides in the cytoplasm. The enzyme catalyses coproporphyrinogen III + O2 + 2 H(+) = protoporphyrinogen IX + 2 CO2 + 2 H2O. It participates in porphyrin-containing compound metabolism; protoporphyrin-IX biosynthesis; protoporphyrinogen-IX from coproporphyrinogen-III (O2 route): step 1/1. Functionally, involved in the heme biosynthesis. Catalyzes the aerobic oxidative decarboxylation of propionate groups of rings A and B of coproporphyrinogen-III to yield the vinyl groups in protoporphyrinogen-IX. This chain is Oxygen-dependent coproporphyrinogen-III oxidase, found in Xanthomonas campestris pv. campestris (strain 8004).